A 385-amino-acid polypeptide reads, in one-letter code: Pepsin A (385 aa).

The signal sequence occupies residues 1–15; that stretch reads MKWLLLLSLVVLSEC. Positions 16–59 are cleaved as a propeptide — activation peptide; that stretch reads LVKVPLVRKKSLRQNLIKNGKLKDFLKTHKHNPASKYFPEAAAL. Residues 73–382 form the Peptidase A1 domain; sequence YFGTIGIGTP…DRANNKVGLA (310 aa). D91 is a catalytic residue. Cysteines 104 and 109 form a disulfide. The residue at position 127 (S127) is a Phosphoserine. The cysteines at positions 265 and 269 are disulfide-linked. D274 is an active-site residue. Residues C308 and C341 are joined by a disulfide bond.

Belongs to the peptidase A1 family. Minor amounts of the active enzyme occur with 'Ala-58' at the amino end.

The protein localises to the secreted. The enzyme catalyses Preferential cleavage: hydrophobic, preferably aromatic, residues in P1 and P1' positions. Cleaves 1-Phe-|-Val-2, 4-Gln-|-His-5, 13-Glu-|-Ala-14, 14-Ala-|-Leu-15, 15-Leu-|-Tyr-16, 16-Tyr-|-Leu-17, 23-Gly-|-Phe-24, 24-Phe-|-Phe-25 and 25-Phe-|-Tyr-26 bonds in the B chain of insulin.. Its function is as follows. Shows particularly broad specificity; although bonds involving phenylalanine and leucine are preferred, many others are also cleaved to some extent. The protein is Pepsin A (PGA) of Sus scrofa (Pig).